The primary structure comprises 247 residues: 2,3-bisphosphoglycerate-dependent phosphoglycerate mutase (247 aa).

Substrate-binding positions include 8–15 (RHGESVWN), 21–22 (TG), R60, 87–90 (ERHY), K98, 114–115 (RR), and 183–184 (GN). Catalysis depends on H9, which acts as the Tele-phosphohistidine intermediate. The active-site Proton donor/acceptor is the E87.

The protein belongs to the phosphoglycerate mutase family. BPG-dependent PGAM subfamily. Homodimer.

The catalysed reaction is (2R)-2-phosphoglycerate = (2R)-3-phosphoglycerate. Its pathway is carbohydrate degradation; glycolysis; pyruvate from D-glyceraldehyde 3-phosphate: step 3/5. Catalyzes the interconversion of 2-phosphoglycerate and 3-phosphoglycerate. This Geobacter metallireducens (strain ATCC 53774 / DSM 7210 / GS-15) protein is 2,3-bisphosphoglycerate-dependent phosphoglycerate mutase.